Here is a 116-residue protein sequence, read N- to C-terminus: Vesicle-associated membrane protein 2 (116 aa).

Positions 1–33 are disordered; that stretch reads MSATAATAPPAAPAGEGGPPAPPPNLTSNRRLQ. Ser2 is modified (N-acetylserine). Residues 2–94 are Cytoplasmic-facing; that stretch reads SATAATAPPA…KRKYWWKNLK (93 aa). The 61-residue stretch at 31–91 folds into the v-SNARE coiled-coil homology domain; that stretch reads RLQQTQAQVD…AKLKRKYWWK (61 aa). The interval 92-116 is required for interaction with SEPT8; it reads NLKMMIILGVICAIILIIIIVYFSS. A helical; Anchor for type IV membrane protein membrane pass occupies residues 95-114; that stretch reads MMIILGVICAIILIIIIVYF. At 115–116 the chain is on the vesicular side; the sequence is SS.

Belongs to the synaptobrevin family. As to quaternary structure, part of the SNARE core complex containing SNAP25, VAMP2 and STX1A; this complex constitutes the basic catalytic machinery of the complex neurotransmitter release apparatus. Recruited to the SNARE complex following binding of the SNARE complex component STX1A to STXBP1. This complex binds to CPLX1. Interacts with POPDC1 and STX4. Interacts with VAPA and VAPB. Interacts with WDFY2, PRKCZ and PRKCI. Forms a complex with WDFY2 and PRKCZ. Interacts (via N-terminus) with KCNB1 (via N-terminus and C-terminus); stimulates the channel inactivation rate of KCNB1. Interacts with SEPT8; the interaction inhibits interaction of VAMP2 with SYP. Interacts with SYP; the interaction is inhibited by interaction with SEPT8. Interacts with PICALM. Interacts with alpha-synuclein/SNCA. Interacts with STX3. Phosphorylated by PRKCZ in vitro and this phosphorylation is increased in the presence of WDFY2.

It localises to the cytoplasmic vesicle. The protein localises to the secretory vesicle. The protein resides in the synaptic vesicle membrane. It is found in the cell membrane. Its function is as follows. Involved in the targeting and/or fusion of transport vesicles to their target membrane. Major SNARE protein of synaptic vesicles which mediates fusion of synaptic vesicles to release neurotransmitters. Essential for fast vesicular exocytosis and activity-dependent neurotransmitter release as well as fast endocytosis that mediates rapid reuse of synaptic vesicles. Modulates the gating characteristics of the delayed rectifier voltage-dependent potassium channel KCNB1. The sequence is that of Vesicle-associated membrane protein 2 (VAMP2) from Bos taurus (Bovine).